We begin with the raw amino-acid sequence, 205 residues long: dITP/XTP pyrophosphatase (205 aa).

10 to 15 (TKNEGK) serves as a coordination point for substrate. Residues E44 and D73 each contribute to the Mg(2+) site. Catalysis depends on D73, which acts as the Proton acceptor. Residues S74, 156-159 (FGYD), K179, and 184-185 (HR) each bind substrate.

The protein belongs to the HAM1 NTPase family. In terms of assembly, homodimer. Mg(2+) is required as a cofactor.

The enzyme catalyses XTP + H2O = XMP + diphosphate + H(+). It catalyses the reaction dITP + H2O = dIMP + diphosphate + H(+). The catalysed reaction is ITP + H2O = IMP + diphosphate + H(+). In terms of biological role, pyrophosphatase that catalyzes the hydrolysis of nucleoside triphosphates to their monophosphate derivatives, with a high preference for the non-canonical purine nucleotides XTP (xanthosine triphosphate), dITP (deoxyinosine triphosphate) and ITP. Seems to function as a house-cleaning enzyme that removes non-canonical purine nucleotides from the nucleotide pool, thus preventing their incorporation into DNA/RNA and avoiding chromosomal lesions. The chain is dITP/XTP pyrophosphatase from Dictyoglomus thermophilum (strain ATCC 35947 / DSM 3960 / H-6-12).